Consider the following 224-residue polypeptide: 7-cyano-7-deazaguanine synthase (224 aa).

12 to 22 (LSGGLDSSTVT) is a binding site for ATP. Cysteine 193, cysteine 201, cysteine 204, and cysteine 207 together coordinate Zn(2+).

Belongs to the QueC family. It depends on Zn(2+) as a cofactor.

The catalysed reaction is 7-carboxy-7-deazaguanine + NH4(+) + ATP = 7-cyano-7-deazaguanine + ADP + phosphate + H2O + H(+). It participates in purine metabolism; 7-cyano-7-deazaguanine biosynthesis. In terms of biological role, catalyzes the ATP-dependent conversion of 7-carboxy-7-deazaguanine (CDG) to 7-cyano-7-deazaguanine (preQ(0)). This chain is 7-cyano-7-deazaguanine synthase, found in Prochlorococcus marinus (strain AS9601).